Reading from the N-terminus, the 1163-residue chain is Rho GTPase-activating protein 45 (1163 aa).

The segment at 1 to 99 (MFSRKKRELM…KRPTSLSRHA (99 aa)) is disordered. Ser-23 and Ser-25 each carry phosphoserine. Positions 55–65 (LPKELPRKDGA) are enriched in basic and acidic residues. Phosphoserine occurs at positions 100, 120, and 126. 3 disordered regions span residues 118–137 (HRSPLTAASPGELPTEGTGP), 262–282 (PPGDSSQSMESLYGSGSEGTP), and 454–475 (EEEQAGTAPGAGSTATKTLDKR). In terms of domain architecture, F-BAR spans 296–566 (EEVDVLLQRC…SSKLYDPGQQ (271 aa)). Residues 403–526 (EHEKRRKEIK…QIQEVIRQSD (124 aa)) adopt a coiled-coil conformation. Residues 458–470 (AGTAPGAGSTATK) are compositionally biased toward low complexity. Phosphoserine occurs at positions 596, 605, and 619. The interval 610–695 (DVAGPEAAGS…VDPEGGAGAS (86 aa)) is disordered. Residues 633–644 (KGHRAGRGHQVH) show a composition bias toward basic residues. Phosphoserine is present on Ser-646. Residues 673–682 (TSSSGTMSST) show a composition bias toward low complexity. A Phorbol-ester/DAG-type zinc finger spans residues 729-774 (THRLRKLRTPAKCRECNSYVYFQGAECEECCLACHKKCLETLAIQC). Residues 788-1001 (QDFSHAARSA…TLIVHYGLVF (214 aa)) form the Rho-GAP domain. Phosphoserine occurs at positions 976, 1054, 1057, and 1059. Disordered stretches follow at residues 1042 to 1067 (AAEDGCRESRVVSNDSDSDLEEASEL) and 1087 to 1163 (SEAS…PEFV). Positions 1087-1099 (SEASLEEASGSHS) are enriched in low complexity. The segment covering 1125-1137 (SGFNTNQSNNVLQ) has biased composition (polar residues).

The protein localises to the cytoplasm. Its subcellular location is the cell projection. It is found in the ruffle membrane. Functionally, contains a GTPase activator for the Rho-type GTPases (RhoGAP) domain that would be able to negatively regulate the actin cytoskeleton as well as cell spreading. However, also contains N-terminally a BAR-domin which is able to play an autoinhibitory effect on this RhoGAP activity. The chain is Rho GTPase-activating protein 45 from Pongo abelii (Sumatran orangutan).